Consider the following 175-residue polypeptide: Gamma-crystallin-1 (175 aa).

Beta/gamma crystallin 'Greek key' domains are found at residues 2–40 and 41–83; these read GKIFFYEERNFQGRHYECGSDYSDLSSYFNRCNSIRVEG and GNWI…RFLP. Residues 84 to 88 form a connecting peptide region; the sequence is NYQGQ. Beta/gamma crystallin 'Greek key' domains follow at residues 89 to 129 and 130 to 172; these read YKMR…NVFD and GHWM…RRVY.

The protein belongs to the beta/gamma-crystallin family. In terms of assembly, monomer.

In terms of biological role, crystallins are the dominant structural components of the vertebrate eye lens. The protein is Gamma-crystallin-1 (cryg1) of Xenopus laevis (African clawed frog).